A 276-amino-acid chain; its full sequence is Radial spoke head protein 9 homolog (276 aa).

This sequence belongs to the flagellar radial spoke RSP9 family. In terms of assembly, component of the axonemal radial spoke 1 (RS1) and 2 (RS2) complexes, at least composed of spoke head proteins RSPH1, RSPH3, RSPH9 and the cilia-specific component RSPH4A or sperm-specific component RSPH6A, spoke stalk proteins RSPH14, DNAJB13, DYDC1, ROPN1L and NME5, and the RS1 complex-specific anchor protein IQUB. Interacts with IQUB. Interacts with RSPH3B. Interacts with RSPH4A. Interacts with RSPH6A. Interacts with CFAP61. Interacts with LRRC23. As to expression, expressed in the testis, trachea, lung, oviduct and ependymal cells (at protein level).

The protein resides in the cytoplasm. Its subcellular location is the cytoskeleton. The protein localises to the cilium axoneme. It localises to the flagellum axoneme. It is found in the cell projection. The protein resides in the kinocilium. Functionally, functions as part of axonemal radial spoke complexes that play an important part in the motility of sperm and cilia. Essential for both the radial spoke head assembly and the central pair microtubule stability in ependymal motile cilia. Required for motility of olfactory and neural cilia and for the structural integrity of ciliary axonemes in both 9+0 and 9+2 motile cilia. This chain is Radial spoke head protein 9 homolog (Rsph9), found in Mus musculus (Mouse).